The chain runs to 171 residues: ATP synthase subunit b (171 aa).

The helical transmembrane segment at 2 to 22 threads the bilayer; it reads FLVKMVLGFLILLSPLCATGL.

Belongs to the ATPase B chain family. As to quaternary structure, F-type ATPases have 2 components, F(1) - the catalytic core - and F(0) - the membrane proton channel. F(1) has five subunits: alpha(3), beta(3), gamma(1), delta(1), epsilon(1). F(0) has three main subunits: a(1), b(2) and c(10-14). The alpha and beta chains form an alternating ring which encloses part of the gamma chain. F(1) is attached to F(0) by a central stalk formed by the gamma and epsilon chains, while a peripheral stalk is formed by the delta and b chains.

It is found in the cell inner membrane. F(1)F(0) ATP synthase produces ATP from ADP in the presence of a proton or sodium gradient. F-type ATPases consist of two structural domains, F(1) containing the extramembraneous catalytic core and F(0) containing the membrane proton channel, linked together by a central stalk and a peripheral stalk. During catalysis, ATP synthesis in the catalytic domain of F(1) is coupled via a rotary mechanism of the central stalk subunits to proton translocation. Its function is as follows. Component of the F(0) channel, it forms part of the peripheral stalk, linking F(1) to F(0). The chain is ATP synthase subunit b from Helicobacter pylori (strain HPAG1).